The following is a 154-amino-acid chain: UPF0178 protein RC1_2062 (154 aa).

It belongs to the UPF0178 family.

In Rhodospirillum centenum (strain ATCC 51521 / SW), this protein is UPF0178 protein RC1_2062.